We begin with the raw amino-acid sequence, 483 residues long: Glutamate--tRNA ligase (483 aa).

The 'HIGH' region signature appears at 11–21 (PSPTGLLHIGN). A 'KMSKS' region motif is present at residues 255-259 (KLSKR). An ATP-binding site is contributed by lysine 258.

It belongs to the class-I aminoacyl-tRNA synthetase family. Glutamate--tRNA ligase type 1 subfamily. In terms of assembly, monomer.

It is found in the cytoplasm. It catalyses the reaction tRNA(Glu) + L-glutamate + ATP = L-glutamyl-tRNA(Glu) + AMP + diphosphate. Its function is as follows. Catalyzes the attachment of glutamate to tRNA(Glu) in a two-step reaction: glutamate is first activated by ATP to form Glu-AMP and then transferred to the acceptor end of tRNA(Glu). This Lactococcus lactis subsp. cremoris (strain MG1363) protein is Glutamate--tRNA ligase.